A 275-amino-acid chain; its full sequence is Bis(5'-nucleosyl)-tetraphosphatase, symmetrical (275 aa).

Belongs to the Ap4A hydrolase family.

The catalysed reaction is P(1),P(4)-bis(5'-adenosyl) tetraphosphate + H2O = 2 ADP + 2 H(+). Hydrolyzes diadenosine 5',5'''-P1,P4-tetraphosphate to yield ADP. This Haemophilus influenzae (strain PittGG) protein is Bis(5'-nucleosyl)-tetraphosphatase, symmetrical.